The primary structure comprises 907 residues: Envelope glycoprotein B (907 aa).

Positions 1 to 24 (MESRIWCLVVCVNLCIVCLGAAVS) are cleaved as a signal peptide. At 25–751 (SSSTRGTSAT…EGVATFLKNP (727 aa)) the chain is on the virion surface side. A disordered region spans residues 29–62 (RGTSATHSHHSSHTTSAAHSRSGSVSQRVTSSQT). Residues 41-62 (HTTSAAHSRSGSVSQRVTSSQT) are compositionally biased toward low complexity. Residues N68, N73, and N85 are each glycosylated (N-linked (GlcNAc...) asparagine; by host). 4 disulfides stabilise this stretch: C94/C551, C111/C507, C185/C250, and C344/C391. The interval 152–158 (SYAYIHT) is involved in fusion and/or binding to host membrane. An N-linked (GlcNAc...) asparagine; by host glycan is attached at N208. An involved in fusion and/or binding to host membrane region spans residues 237-244 (GSTWLYRE). N-linked (GlcNAc...) asparagine; by host glycans are attached at residues N281, N286, N302, N341, N383, N405, N409, N417, N447, N452, N456, N466, N555, and N586. A disulfide bridge links C574 with C611. Positions 697 to 749 (VEDKVVDPLPPYLKGLDDLMSGLGAAGKAVGVAIGAVGGAVASVVEGVATFLK) are hydrophobic membrane proximal region. The chain crosses the membrane as a helical span at residues 752 to 772 (FGAFTIILVAIAVVIITYLIY). Over 773–907 (TRQRRLCTQP…LKDSDEEENV (135 aa)) the chain is Intravirion. Composition is skewed to polar residues over residues 798-810 (VTSGSTKDTSLQA) and 860-877 (RAQQNGTDSLDGRTGTQD). 2 disordered regions span residues 798-838 (VTSG…TAAP) and 857-907 (AEQR…EENV). A compositionally biased stretch (basic and acidic residues) spans 878–887 (KGQKPNLLDR). The Internalization motif motif lies at 895–898 (YRHL).

The protein belongs to the herpesviridae glycoprotein B family. As to quaternary structure, homotrimer; disulfide-linked. Binds to heparan sulfate proteoglycans. Interacts with gH/gL heterodimer. In terms of processing, a proteolytic cleavage by host furin generates two subunits that remain linked by disulfide bonds.

The protein resides in the virion membrane. The protein localises to the host cell membrane. It localises to the host endosome membrane. Its subcellular location is the host Golgi apparatus membrane. Functionally, envelope glycoprotein that forms spikes at the surface of virion envelope. Essential for the initial attachment to heparan sulfate moieties of the host cell surface proteoglycans. Involved in fusion of viral and cellular membranes leading to virus entry into the host cell. Following initial binding to its host receptors, membrane fusion is mediated by the fusion machinery composed at least of gB and the heterodimer gH/gL. May be involved in the fusion between the virion envelope and the outer nuclear membrane during virion egress. This Human cytomegalovirus (strain Merlin) (HHV-5) protein is Envelope glycoprotein B.